The chain runs to 323 residues: Elongation factor P--(R)-beta-lysine ligase (323 aa).

76–78 is a binding site for substrate; it reads SPE. ATP-binding positions include 100–102 and N109; that span reads RNE. Y118 contributes to the substrate binding site. 242–243 is an ATP binding site; sequence EL. E249 serves as a coordination point for substrate. G298 serves as a coordination point for ATP.

The protein belongs to the class-II aminoacyl-tRNA synthetase family. EpmA subfamily. Homodimer.

It catalyses the reaction D-beta-lysine + L-lysyl-[protein] + ATP = N(6)-((3R)-3,6-diaminohexanoyl)-L-lysyl-[protein] + AMP + diphosphate + H(+). Its function is as follows. With EpmB is involved in the beta-lysylation step of the post-translational modification of translation elongation factor P (EF-P). Catalyzes the ATP-dependent activation of (R)-beta-lysine produced by EpmB, forming a lysyl-adenylate, from which the beta-lysyl moiety is then transferred to the epsilon-amino group of a conserved specific lysine residue in EF-P. This is Elongation factor P--(R)-beta-lysine ligase from Histophilus somni (strain 129Pt) (Haemophilus somnus).